Here is an 85-residue protein sequence, read N- to C-terminus: Large ribosomal subunit protein bL27 (85 aa).

Residues 1–22 form a disordered region; the sequence is MAHKKGQGSTQNNRDSAGRRLG.

This sequence belongs to the bacterial ribosomal protein bL27 family.

The chain is Large ribosomal subunit protein bL27 from Sulfurimonas denitrificans (strain ATCC 33889 / DSM 1251) (Thiomicrospira denitrificans (strain ATCC 33889 / DSM 1251)).